We begin with the raw amino-acid sequence, 451 residues long: DNA double-strand break repair nuclease NurA (451 aa).

Aspartate 51 and aspartate 126 together coordinate Mn(2+).

The protein belongs to the NurA family. As to quaternary structure, homodimer. Interacts with HerA. Mn(2+) is required as a cofactor.

With respect to regulation, exonuclease activity is stimulated in the presence of HerA. Involved in DNA double-strand break (DSB) repair. Probably acts with HerA to stimulate resection of the 5' strand and produce the long 3' single-strand that is required for RadA loading. Exhibits 5' endonuclease activity and both 5' and 3' exonuclease activities. In Pyrococcus furiosus (strain ATCC 43587 / DSM 3638 / JCM 8422 / Vc1), this protein is DNA double-strand break repair nuclease NurA.